We begin with the raw amino-acid sequence, 100 residues long: Aspartyl/glutamyl-tRNA(Asn/Gln) amidotransferase subunit C (100 aa).

This sequence belongs to the GatC family. In terms of assembly, heterotrimer of A, B and C subunits.

It carries out the reaction L-glutamyl-tRNA(Gln) + L-glutamine + ATP + H2O = L-glutaminyl-tRNA(Gln) + L-glutamate + ADP + phosphate + H(+). It catalyses the reaction L-aspartyl-tRNA(Asn) + L-glutamine + ATP + H2O = L-asparaginyl-tRNA(Asn) + L-glutamate + ADP + phosphate + 2 H(+). In terms of biological role, allows the formation of correctly charged Asn-tRNA(Asn) or Gln-tRNA(Gln) through the transamidation of misacylated Asp-tRNA(Asn) or Glu-tRNA(Gln) in organisms which lack either or both of asparaginyl-tRNA or glutaminyl-tRNA synthetases. The reaction takes place in the presence of glutamine and ATP through an activated phospho-Asp-tRNA(Asn) or phospho-Glu-tRNA(Gln). The polypeptide is Aspartyl/glutamyl-tRNA(Asn/Gln) amidotransferase subunit C (Rickettsia felis (strain ATCC VR-1525 / URRWXCal2) (Rickettsia azadi)).